A 381-amino-acid chain; its full sequence is L-lactate dehydrogenase A-like 6B (381 aa).

NAD(+) is bound by residues 101 to 106 and Arg-148; that span reads DLDEDK. Substrate is bound by residues Arg-155, Asn-187, and Arg-218. Asn-187 provides a ligand contact to NAD(+). Catalysis depends on His-242, which acts as the Proton acceptor. Thr-297 contacts substrate.

It belongs to the LDH/MDH superfamily. LDH family. Testis specific.

The enzyme catalyses (S)-lactate + NAD(+) = pyruvate + NADH + H(+). It functions in the pathway fermentation; pyruvate fermentation to lactate; (S)-lactate from pyruvate: step 1/1. In Homo sapiens (Human), this protein is L-lactate dehydrogenase A-like 6B (LDHAL6B).